We begin with the raw amino-acid sequence, 134 residues long: MKVVKLADIIGTNRDVDGGNWRSQRIVVESDGMGYSLHDTQIKAGTETHLWYKYHLESVYVIEGEGEVETVKDGKVWPVKQYECYVLDKNDEHLLRAKTDMRMVCVFNPPVTGEEVHDEDGAYPLPEHMKPLNS.

Belongs to the ectoine synthase family.

The enzyme catalyses (2S)-4-acetamido-2-aminobutanoate = L-ectoine + H2O. Its pathway is amine and polyamine biosynthesis; ectoine biosynthesis; L-ectoine from L-aspartate 4-semialdehyde: step 3/3. Functionally, catalyzes the circularization of gamma-N-acetyl-alpha,gamma-diaminobutyric acid (ADABA) to ectoine (1,4,5,6-tetrahydro-2-methyl-4-pyrimidine carboxylic acid), which is an excellent osmoprotectant. The protein is L-ectoine synthase of Shouchella clausii (strain KSM-K16) (Alkalihalobacillus clausii).